Reading from the N-terminus, the 358-residue chain is Protein-L-isoaspartate O-methyltransferase domain-containing protein 1 (358 aa).

G2 carries the N-myristoyl glycine lipid modification. The active site involves S64. 3 adoMet binding motif regions span residues 85-94 (LNLGSGTGYL), 160-164 (YDRIY), and 181-191 (LKVGGILVMPI). The interval 240-250 (VRNLQDLARIY) is BC-box. The tract at residues 300 to 339 (PLDSEEDERMEDDNKEEEDKDHSEALKPEEPPRNLLREKI) is disordered. Acidic residues predominate over residues 302–318 (DSEEDERMEDDNKEEED). Residues 319 to 339 (KDHSEALKPEEPPRNLLREKI) are compositionally biased toward basic and acidic residues. The CUL-box stretch occupies residues 342 to 345 (LPLP).

Belongs to the methyltransferase superfamily. L-isoaspartyl/D-aspartyl protein methyltransferase family. Component of the probable ECS(PCMTD1) E3 ubiquitin-protein ligase complex, at least composed of CUL5, ELOB, ELOC, RBX2 and PCMTD1.

It localises to the cytoplasm. The protein localises to the membrane. Functionally, substrate recognition component of an ECS (Elongin BC-CUL5-SOCS-box protein) E3 ubiquitin ligase complex which mediates the ubiquitination and subsequent proteasomal degradation of target proteins. Specifically binds to the methyltransferase cofactor S-adenosylmethionine (AdoMet) via the N-terminal AdoMet binding motif, but does not display methyltransferase activity. May provide an alternate maintenance pathway for modified proteins by acting as a damage-specific E3 ubiquitin ligase adaptor protein. In Gallus gallus (Chicken), this protein is Protein-L-isoaspartate O-methyltransferase domain-containing protein 1 (PCMTD1).